The chain runs to 468 residues: Meiotically up-regulated gene 111 protein (468 aa).

Transmembrane regions (helical) follow at residues 13 to 33 (LVLI…NSVT), 59 to 79 (IVSA…VPFY), 92 to 112 (VFTT…SILY), 116 to 136 (FPTC…ISGT), 158 to 178 (IVVL…LGSI), 190 to 210 (LISW…AVFF), 285 to 305 (PIPI…FFDI), 330 to 350 (FGSL…GFSV), 356 to 376 (TMLI…FATA), 382 to 402 (LALF…LVAA), 417 to 437 (ALLE…AFIV), and 446 to 466 (FFIG…LLLG).

The protein resides in the membrane. In terms of biological role, has a role in meiosis. The sequence is that of Meiotically up-regulated gene 111 protein (mug111) from Schizosaccharomyces pombe (strain 972 / ATCC 24843) (Fission yeast).